The primary structure comprises 282 residues: Chorismate dehydratase (282 aa).

This sequence belongs to the MqnA/MqnD family. MqnA subfamily.

It carries out the reaction chorismate = 3-[(1-carboxyvinyl)-oxy]benzoate + H2O. It participates in quinol/quinone metabolism; menaquinone biosynthesis. Functionally, catalyzes the dehydration of chorismate into 3-[(1-carboxyvinyl)oxy]benzoate, a step in the biosynthesis of menaquinone (MK, vitamin K2). This Streptomyces coelicolor (strain ATCC BAA-471 / A3(2) / M145) protein is Chorismate dehydratase.